Reading from the N-terminus, the 120-residue chain is NAD(P)H-quinone oxidoreductase subunit 3, chloroplastic (120 aa).

Transmembrane regions (helical) follow at residues 9-29 (IFWT…SISG), 64-84 (MFAL…PWAM), and 88-108 (VLGV…VVGL).

It belongs to the complex I subunit 3 family. As to quaternary structure, NDH is composed of at least 16 different subunits, 5 of which are encoded in the nucleus.

It is found in the plastid. It localises to the chloroplast thylakoid membrane. It carries out the reaction a plastoquinone + NADH + (n+1) H(+)(in) = a plastoquinol + NAD(+) + n H(+)(out). The enzyme catalyses a plastoquinone + NADPH + (n+1) H(+)(in) = a plastoquinol + NADP(+) + n H(+)(out). In terms of biological role, NDH shuttles electrons from NAD(P)H:plastoquinone, via FMN and iron-sulfur (Fe-S) centers, to quinones in the photosynthetic chain and possibly in a chloroplast respiratory chain. The immediate electron acceptor for the enzyme in this species is believed to be plastoquinone. Couples the redox reaction to proton translocation, and thus conserves the redox energy in a proton gradient. The sequence is that of NAD(P)H-quinone oxidoreductase subunit 3, chloroplastic from Hordeum vulgare (Barley).